We begin with the raw amino-acid sequence, 595 residues long: Methionine--tRNA ligase (595 aa).

Residues 11-21 (PYANGPRHIGH) carry the 'HIGH' region motif. Zn(2+) contacts are provided by Cys-143, Cys-146, Cys-156, and Cys-159. The 'KMSKS' region signature appears at 350-354 (KFSSS). Position 353 (Ser-353) interacts with ATP.

Belongs to the class-I aminoacyl-tRNA synthetase family. MetG type 1 subfamily. As to quaternary structure, monomer. The cofactor is Zn(2+).

Its subcellular location is the cytoplasm. The catalysed reaction is tRNA(Met) + L-methionine + ATP = L-methionyl-tRNA(Met) + AMP + diphosphate. Its function is as follows. Is required not only for elongation of protein synthesis but also for the initiation of all mRNA translation through initiator tRNA(fMet) aminoacylation. The protein is Methionine--tRNA ligase of Nocardioides sp. (strain ATCC BAA-499 / JS614).